Here is a 320-residue protein sequence, read N- to C-terminus: ATP-dependent 6-phosphofructokinase (320 aa).

ATP is bound by residues Gly11, 72–73 (RY), and 102–105 (GDGS). Position 103 (Asp103) interacts with Mg(2+). Residues 125–127 (TID), Arg162, 169–171 (MGR), Glu222, Arg243, and 249–252 (HMQR) contribute to the substrate site. Asp127 functions as the Proton acceptor in the catalytic mechanism.

The protein belongs to the phosphofructokinase type A (PFKA) family. ATP-dependent PFK group I subfamily. Prokaryotic clade 'B1' sub-subfamily. Homotetramer. Mg(2+) is required as a cofactor.

The protein resides in the cytoplasm. It carries out the reaction beta-D-fructose 6-phosphate + ATP = beta-D-fructose 1,6-bisphosphate + ADP + H(+). The protein operates within carbohydrate degradation; glycolysis; D-glyceraldehyde 3-phosphate and glycerone phosphate from D-glucose: step 3/4. Its activity is regulated as follows. Allosterically activated by ADP and other diphosphonucleosides, and allosterically inhibited by phosphoenolpyruvate. In terms of biological role, catalyzes the phosphorylation of D-fructose 6-phosphate to fructose 1,6-bisphosphate by ATP, the first committing step of glycolysis. The protein is ATP-dependent 6-phosphofructokinase of Lactiplantibacillus plantarum (strain ATCC BAA-793 / NCIMB 8826 / WCFS1) (Lactobacillus plantarum).